An 860-amino-acid polypeptide reads, in one-letter code: Valine--tRNA ligase (860 aa).

The 'HIGH' region signature appears at 53 to 63; sequence PNLTGILHIGH. The 'KMSKS' region signature appears at 527 to 531; it reads KMSKS. Lys-530 is a binding site for ATP. A coiled-coil region spans residues 794 to 860; the sequence is QDKTKIVDKL…LKQDKLNSLK (67 aa).

This sequence belongs to the class-I aminoacyl-tRNA synthetase family. ValS type 1 subfamily. Monomer.

It localises to the cytoplasm. It carries out the reaction tRNA(Val) + L-valine + ATP = L-valyl-tRNA(Val) + AMP + diphosphate. Functionally, catalyzes the attachment of valine to tRNA(Val). As ValRS can inadvertently accommodate and process structurally similar amino acids such as threonine, to avoid such errors, it has a 'posttransfer' editing activity that hydrolyzes mischarged Thr-tRNA(Val) in a tRNA-dependent manner. The polypeptide is Valine--tRNA ligase (Mycoplasmoides gallisepticum (strain R(low / passage 15 / clone 2)) (Mycoplasma gallisepticum)).